A 158-amino-acid polypeptide reads, in one-letter code: Urease subunit beta (158 aa).

A disordered region spans residues 113–158 (EDDWRRSSAAGDAPQELPQVEAAERGRKLDEATDVGTEDTPEEGQN). A compositionally biased stretch (basic and acidic residues) spans 134–143 (AAERGRKLDE). Residues 144–158 (ATDVGTEDTPEEGQN) are compositionally biased toward acidic residues.

The protein belongs to the urease beta subunit family. In terms of assembly, heterotrimer of UreA (gamma), UreB (beta) and UreC (alpha) subunits. Three heterotrimers associate to form the active enzyme.

It localises to the cytoplasm. It carries out the reaction urea + 2 H2O + H(+) = hydrogencarbonate + 2 NH4(+). It functions in the pathway nitrogen metabolism; urea degradation; CO(2) and NH(3) from urea (urease route): step 1/1. The sequence is that of Urease subunit beta from Corynebacterium glutamicum (strain R).